The sequence spans 259 residues: ATP synthase subunit a (259 aa).

The propeptide at 1 to 10 is removed in mature form; that stretch reads MFNLLNTYIT. The next 6 membrane-spanning stretches (helical) occupy residues 36-56, 92-112, 125-145, 150-170, 191-211, and 216-236; these read LTTF…LYTL, WGLY…ANLI, LVFI…LGLY, VFFS…LLVI, ILAG…FMLI, and LVFG…EFAI.

The protein belongs to the ATPase A chain family. As to quaternary structure, F-type ATPases have 2 components, CF(1) - the catalytic core - and CF(0) - the membrane proton channel. In yeast, the dimeric form of ATP synthase consists of 17 polypeptides: alpha, beta, gamma, delta, epsilon, 4 (B), 5 (OSCP), 6 (A), 8, 9 (C), d, E (Tim11), f, g, h, i/j and k.

It localises to the mitochondrion inner membrane. Mitochondrial membrane ATP synthase (F(1)F(0) ATP synthase or Complex V) produces ATP from ADP in the presence of a proton gradient across the membrane which is generated by electron transport complexes of the respiratory chain. F-type ATPases consist of two structural domains, F(1) - containing the extramembraneous catalytic core and F(0) - containing the membrane proton channel, linked together by a central stalk and a peripheral stalk. During catalysis, ATP synthesis in the catalytic domain of F(1) is coupled via a rotary mechanism of the central stalk subunits to proton translocation. Key component of the proton channel; it may play a direct role in the translocation of protons across the membrane. This Saccharomyces cerevisiae (strain ATCC 204508 / S288c) (Baker's yeast) protein is ATP synthase subunit a (ATP6).